We begin with the raw amino-acid sequence, 957 residues long: Leucine--tRNA ligase (957 aa).

The 'HIGH' region motif lies at 66-77 (PYPSGAGLHVGH). Residues 728-732 (KMGKS) carry the 'KMSKS' region motif. Residue lysine 731 participates in ATP binding.

Belongs to the class-I aminoacyl-tRNA synthetase family.

Its subcellular location is the cytoplasm. It carries out the reaction tRNA(Leu) + L-leucine + ATP = L-leucyl-tRNA(Leu) + AMP + diphosphate. This is Leucine--tRNA ligase from Streptomyces griseus subsp. griseus (strain JCM 4626 / CBS 651.72 / NBRC 13350 / KCC S-0626 / ISP 5235).